A 167-amino-acid chain; its full sequence is Small ribosomal subunit protein uS3m (167 aa).

A mitochondrion-targeting transit peptide spans 1 to 35 (MAWSASVRGLGQRVLACSRELPGAWRTLHTSAVCA).

This sequence belongs to the universal ribosomal protein uS3 family. As to quaternary structure, component of the mitochondrial ribosome small subunit (28S) which comprises a 12S rRNA and about 30 distinct proteins.

It is found in the mitochondrion. This Mus musculus (Mouse) protein is Small ribosomal subunit protein uS3m (Mrps24).